The sequence spans 216 residues: Transmembrane emp24 domain-containing protein eca (216 aa).

Residues 1–20 form the signal peptide; that stretch reads MRDQFICLALLLCALHSACG. At 21-182 the chain is on the lumenal side; it reads LYFHISETER…FRHTSESTNS (162 aa). Residues 30-126 enclose the GOLD domain; it reads RKCFIEEVPD…QLRVHLDIQV (97 aa). The stretch at 134 to 164 forms a coiled coil; sequence ANVAQKEKLTELQLRIRQLLDQVEQITKEQN. Residues 183–203 traverse the membrane as a helical segment; it reads RVLWWSLAQTLVLVCMGFWQM. The Cytoplasmic segment spans residues 204-216; the sequence is RHLKSFFEAKKLV. The Prevents secretion from ER signature appears at 213–216; that stretch reads KKLV.

The protein belongs to the EMP24/GP25L family.

Its subcellular location is the endoplasmic reticulum membrane. Eca and bai are essential, though not redundant, for dorsoventral patterning of the embryo. Specifically required during early embryogenesis for the activity of maternal tkv, while the zygotic tkv is not affected. Involved in Golgi organization. The sequence is that of Transmembrane emp24 domain-containing protein eca from Drosophila pseudoobscura pseudoobscura (Fruit fly).